The following is a 156-amino-acid chain: UPF0178 protein Jann_2168 (156 aa).

Belongs to the UPF0178 family.

The polypeptide is UPF0178 protein Jann_2168 (Jannaschia sp. (strain CCS1)).